The primary structure comprises 128 residues: UPF0102 protein GSU0650 (128 aa).

It belongs to the UPF0102 family.

The protein is UPF0102 protein GSU0650 of Geobacter sulfurreducens (strain ATCC 51573 / DSM 12127 / PCA).